A 129-amino-acid polypeptide reads, in one-letter code: Iron-sulfur cluster assembly 1 homolog, mitochondrial (129 aa).

Residues 1-12 (MSASLVRATVRA) constitute a mitochondrion transit peptide. The Fe cation site is built by cysteine 57, cysteine 121, and cysteine 123.

It belongs to the HesB/IscA family. Interacts with CRY2, but not with CRY1 (in vitro).

The protein localises to the mitochondrion. Functionally, involved in the maturation of mitochondrial 4Fe-4S proteins functioning late in the iron-sulfur cluster assembly pathway. Probably involved in the binding of an intermediate of Fe/S cluster assembly. The protein is Iron-sulfur cluster assembly 1 homolog, mitochondrial (ISCA1) of Bos taurus (Bovine).